The chain runs to 644 residues: 3D-(3,5/4)-trihydroxycyclohexane-1,2-dione hydrolase 2 (644 aa).

Thiamine diphosphate is bound at residue E65. The tract at residues 442-522 (SLPGDLQRMW…INVLLFDNSG (81 aa)) is thiamine pyrophosphate binding. Mg(2+)-binding residues include D493 and N520.

Belongs to the TPP enzyme family. The cofactor is Mg(2+). It depends on thiamine diphosphate as a cofactor.

It carries out the reaction 3D-3,5/4-trihydroxycyclohexane-1,2-dione + H2O = 5-deoxy-D-glucuronate + H(+). Its pathway is polyol metabolism; myo-inositol degradation into acetyl-CoA; acetyl-CoA from myo-inositol: step 3/7. Its function is as follows. Involved in the cleavage of the C1-C2 bond of 3D-(3,5/4)-trihydroxycyclohexane-1,2-dione (THcHDO) to yield 5-deoxy-glucuronate (5DG). This chain is 3D-(3,5/4)-trihydroxycyclohexane-1,2-dione hydrolase 2, found in Bacillus cereus (strain ZK / E33L).